Consider the following 195-residue polypeptide: Keratin-associated protein 4-3 (195 aa).

Repeat copies occupy residues 34-38 (CCRTT), 39-43 (CCRPS), 44-48 (CCISS), 49-53 (CCRPS), 54-58 (CCISS), 59-63 (CCKPS), 64-68 (CCRTT), 69-73 (CCRPS), 74-78 (CCISS), 79-83 (CCRPS), 84-88 (CCISS), 89-93 (CCKPS), 94-98 (CCRTT), 99-103 (CCRPS), 104-108 (CCISS), 109-113 (CCRPS), 114-118 (CCISS), 119-123 (CCKPS), 124-128 (CCQTT), 129-133 (CCRPS), 134-138 (CCISS), 144-148 (CCQPS), 149-153 (CCRPA), 154-158 (CCISS), 159-163 (CCHPS), 164-168 (CCVSS), 179-183 (CCRTT), and 189-193 (CCGSS). The segment at 34-193 (CCRTTCCRPS…CFHPICCGSS (160 aa)) is 29 X 5 AA repeats of C-C-[GIKRQVH]-[SPT]-[STA].

It belongs to the KRTAP type 4 family. Interacts with hair keratins. Expressed specifically in the middle/uper portions of the hair cortex. Not detected in the hair matrix or cuticle.

In terms of biological role, in the hair cortex, hair keratin intermediate filaments are embedded in an interfilamentous matrix, consisting of hair keratin-associated proteins (KRTAP), which are essential for the formation of a rigid and resistant hair shaft through their extensive disulfide bond cross-linking with abundant cysteine residues of hair keratins. The matrix proteins include the high-sulfur and high-glycine-tyrosine keratins. This chain is Keratin-associated protein 4-3 (KRTAP4-3), found in Homo sapiens (Human).